The chain runs to 314 residues: MIEIEKPKIETVEISDDAKFGKFVVEPLERGYGTTLGNSLRRILLSSLPGAAVTSIQIDGVLHEFSTIEGVVEDVTTIILHIKKLALKIYSDEEKTLEIDVQGEGTVTAADITHDSDVEILNPDLHIATLGENASFRVRLTAQRGRGYTPADSNKRDDQPIGVIPIDSIFTPVSRLSYQVENTRVGQVANYDKLTLDVWTDGSTGPKEAIALGSKILTEHLNIFVGLTDEAQHAEIMVEKEEDQKEKVLEMTIEELDLSVRSYNCLKRAGINTVQELANKTEEDMMKVRNLGRKSLEEVKAKLEELGLGLRKDD.

Residues 1–228 (MIEIEKPKIE…EHLNIFVGLT (228 aa)) form an alpha N-terminal domain (alpha-NTD) region. The tract at residues 246 to 314 (EKVLEMTIEE…ELGLGLRKDD (69 aa)) is alpha C-terminal domain (alpha-CTD).

The protein belongs to the RNA polymerase alpha chain family. In terms of assembly, homodimer. The RNAP catalytic core consists of 2 alpha, 1 beta, 1 beta' and 1 omega subunit. When a sigma factor is associated with the core the holoenzyme is formed, which can initiate transcription.

The catalysed reaction is RNA(n) + a ribonucleoside 5'-triphosphate = RNA(n+1) + diphosphate. Its function is as follows. DNA-dependent RNA polymerase catalyzes the transcription of DNA into RNA using the four ribonucleoside triphosphates as substrates. This chain is DNA-directed RNA polymerase subunit alpha, found in Bacillus velezensis (strain DSM 23117 / BGSC 10A6 / LMG 26770 / FZB42) (Bacillus amyloliquefaciens subsp. plantarum).